Consider the following 339-residue polypeptide: MVREEVAGSTQTLQWKCVESRVDSKRLYYGRFILSPLRKGQADTVGIALRRALLGEIEGACITRAKFGSVPHEYSTIAGIEESVQEILLNLKEIVLRSNLYGVRDASICVKGPRYITAQDIILPPSVEIVDTAQPIANLTEPIDFCIDLQIKRDRGYQTELRKNYQDGSYPIDAVSMPVRNVNYSIFSCGNGNEKHEILFLEIWTNGSLTPKEALYEASRNLIDLFLPFLHAEEEGASFEENKNRFTPPLFTFQKRLTNLKKNKKGIPLNCIFIDQLELTSRTYNCLKRANIHTLLDLLSKTEEDLLRIDSFRMEDRKHIWDTLEKHLPIDLLKNKLSF.

Residues 1-233 (MVREEVAGST…DLFLPFLHAE (233 aa)) form an alpha N-terminal domain (alpha-NTD) region. Residues 264–339 (KKGIPLNCIF…IDLLKNKLSF (76 aa)) form an alpha C-terminal domain (alpha-CTD) region.

It belongs to the RNA polymerase alpha chain family. In plastids the minimal PEP RNA polymerase catalytic core is composed of four subunits: alpha, beta, beta', and beta''. When a (nuclear-encoded) sigma factor is associated with the core the holoenzyme is formed, which can initiate transcription.

The protein resides in the plastid. It is found in the chloroplast. It catalyses the reaction RNA(n) + a ribonucleoside 5'-triphosphate = RNA(n+1) + diphosphate. DNA-dependent RNA polymerase catalyzes the transcription of DNA into RNA using the four ribonucleoside triphosphates as substrates. In Aegilops uniaristata (Goatgrass), this protein is DNA-directed RNA polymerase subunit alpha.